The sequence spans 814 residues: Syn-copalyl diphosphate synthase TPS3, chloroplastic (814 aa).

The N-terminal 52 residues, 1 to 52, are a transit peptide targeting the chloroplast; it reads MCSLSTLSPNFSNAYGSKSVSSTASRFPCWQRSNETWKTQSREVIHWTYVVR. Position 248 (K248) interacts with substrate. D386 and D388 together coordinate Mg(2+). Positions 386 to 389 match the DXDD motif motif; it reads DIDD. K472 serves as a coordination point for substrate.

This sequence belongs to the terpene synthase family. Mg(2+) serves as cofactor. As to expression, mostly expressed in trichomes of leaves and fruits.

It localises to the plastid. The protein localises to the chloroplast. It carries out the reaction (2E,6E,10E)-geranylgeranyl diphosphate = 9alpha-copalyl diphosphate. The protein operates within secondary metabolite biosynthesis; terpenoid biosynthesis. In terms of biological role, involved in the biosynthesis of labdane-type diterpenoid including cleroda-dienols, and peregrinol lactones and furan derivatives, dopaminergic diterpenoids that can bind to dopamine receptors in the human pituitary gland, have probably ability to lower prolactin levels, and are used to treat menstrual cycle disorders (e.g. premenstrual syndrome and mastodynia). Terpene synthase that produces syn-copalyl diphosophate from geranylgeranyl diphosphate (GGPP). This is Syn-copalyl diphosphate synthase TPS3, chloroplastic from Vitex agnus-castus (Chaste tree).